A 201-amino-acid polypeptide reads, in one-letter code: Large ribosomal subunit protein uL4 (201 aa).

Residues 45 to 71 (AQKTRAEVTGSGKKPWRQKGTGRARAG) are disordered.

The protein belongs to the universal ribosomal protein uL4 family. Part of the 50S ribosomal subunit.

One of the primary rRNA binding proteins, this protein initially binds near the 5'-end of the 23S rRNA. It is important during the early stages of 50S assembly. It makes multiple contacts with different domains of the 23S rRNA in the assembled 50S subunit and ribosome. In terms of biological role, forms part of the polypeptide exit tunnel. This chain is Large ribosomal subunit protein uL4, found in Shewanella pealeana (strain ATCC 700345 / ANG-SQ1).